Consider the following 390-residue polypeptide: Transforming growth factor beta-1 proprotein (390 aa).

The N-terminal stretch at 1 to 29 (MPPSGLRLLPLLLPLPWLLVLTPGRPAAG) is a signal peptide. The straightjacket domain stretch occupies residues 30-74 (LSTCKTIDMELVKRKRIEAIRGQILSKLRLASPPSQGEVPPGPLP). The interval 75–271 (EAVLALYNST…ATPLERAQHL (197 aa)) is arm domain. 3 N-linked (GlcNAc...) asparagine glycosylation sites follow: Asn82, Asn136, and Asn176. Residues 226–252 (DSKDNKLHVEINGISPKRRGDLGTIHD) form a bowtie tail region. The Cell attachment site motif lies at 244-246 (RGD). 4 cysteine pairs are disulfide-bonded: Cys285-Cys294, Cys293-Cys356, Cys322-Cys387, and Cys326-Cys389.

The protein belongs to the TGF-beta family. Homodimer; disulfide-linked. Interacts with the serine proteases, HTRA1 and HTRA3: the interaction with either inhibits TGFB1-mediated signaling and the HTRA protease activity is required for this inhibition. May interact with THSD4; this interaction may lead to sequestration by FBN1 microfibril assembly and attenuation of TGFB signaling. Interacts with CD109, DPT and ASPN. Interacts with EFEMP2. Interacts with TSKU; the interaction contributes to regulation of the hair cycle. Interacts with TGFBR3. In terms of assembly, homodimer; disulfide-linked. Interacts with transforming growth factor beta-1 (TGF-beta-1) chain; interaction is non-covalent and maintains TGF-beta-1 in a latent state; each latency-associated peptide (LAP) monomer interacts with TGF-beta-1 in the other monomer. Interacts with LTBP1; leading to regulation of TGF-beta-1 activation. Interacts with LRRC32/GARP; leading to regulation of TGF-beta-1 activation on the surface of activated regulatory T-cells (Tregs). Interacts with LRRC33/NRROS; leading to regulation of TGF-beta-1 activation in macrophages and microglia. Interacts (via cell attachment site) with integrins ITGAV and ITGB6 (ITGAV:ITGB6), leading to release of the active TGF-beta-1. Interacts with NREP; the interaction results in a decrease in TGFB1 autoinduction. Interacts with HSP90AB1; inhibits latent TGFB1 activation. As to quaternary structure, homodimer; disulfide-linked. Interacts with TGF-beta receptors (TGFBR1 and TGFBR2), leading to signal transduction. Post-translationally, transforming growth factor beta-1 proprotein: The precursor proprotein is cleaved in the Golgi apparatus by FURIN to form Transforming growth factor beta-1 (TGF-beta-1) and Latency-associated peptide (LAP) chains, which remain non-covalently linked, rendering TGF-beta-1 inactive. N-glycosylated. Deglycosylation leads to activation of Transforming growth factor beta-1 (TGF-beta-1); mechanisms triggering deglycosylation-driven activation of TGF-beta-1 are however unclear. In terms of tissue distribution, expressed in cardiomyocytes. Weakly expressed in the mammary glands, with a slight increase of expression following onset of involution.

It localises to the secreted. The protein localises to the extracellular space. Its subcellular location is the extracellular matrix. Functionally, transforming growth factor beta-1 proprotein: Precursor of the Latency-associated peptide (LAP) and Transforming growth factor beta-1 (TGF-beta-1) chains, which constitute the regulatory and active subunit of TGF-beta-1, respectively. Its function is as follows. Required to maintain the Transforming growth factor beta-1 (TGF-beta-1) chain in a latent state during storage in extracellular matrix. Associates non-covalently with TGF-beta-1 and regulates its activation via interaction with 'milieu molecules', such as LTBP1, LRRC32/GARP and LRRC33/NRROS, that control activation of TGF-beta-1. Interaction with LRRC33/NRROS regulates activation of TGF-beta-1 in macrophages and microglia. Interaction with LRRC32/GARP controls activation of TGF-beta-1 on the surface of activated regulatory T-cells (Tregs). Interaction with integrins (ITGAV:ITGB6 or ITGAV:ITGB8) results in distortion of the Latency-associated peptide chain and subsequent release of the active TGF-beta-1. Multifunctional protein that regulates the growth and differentiation of various cell types and is involved in various processes, such as normal development, immune function, microglia function and responses to neurodegeneration. Activation into mature form follows different steps: following cleavage of the proprotein in the Golgi apparatus, Latency-associated peptide (LAP) and Transforming growth factor beta-1 (TGF-beta-1) chains remain non-covalently linked rendering TGF-beta-1 inactive during storage in extracellular matrix. At the same time, LAP chain interacts with 'milieu molecules', such as LTBP1, LRRC32/GARP and LRRC33/NRROS that control activation of TGF-beta-1 and maintain it in a latent state during storage in extracellular milieus. TGF-beta-1 is released from LAP by integrins (ITGAV:ITGB6 or ITGAV:ITGB8): integrin-binding to LAP stabilizes an alternative conformation of the LAP bowtie tail and results in distortion of the LAP chain and subsequent release of the active TGF-beta-1. Once activated following release of LAP, TGF-beta-1 acts by binding to TGF-beta receptors (TGFBR1 and TGFBR2), which transduce signal. While expressed by many cells types, TGF-beta-1 only has a very localized range of action within cell environment thanks to fine regulation of its activation by Latency-associated peptide chain (LAP) and 'milieu molecules'. Plays an important role in bone remodeling: acts as a potent stimulator of osteoblastic bone formation, causing chemotaxis, proliferation and differentiation in committed osteoblasts. Can promote either T-helper 17 cells (Th17) or regulatory T-cells (Treg) lineage differentiation in a concentration-dependent manner. At high concentrations, leads to FOXP3-mediated suppression of RORC and down-regulation of IL-17 expression, favoring Treg cell development. At low concentrations in concert with IL-6 and IL-21, leads to expression of the IL-17 and IL-23 receptors, favoring differentiation to Th17 cells. Stimulates sustained production of collagen through the activation of CREB3L1 by regulated intramembrane proteolysis (RIP). Mediates SMAD2/3 activation by inducing its phosphorylation and subsequent translocation to the nucleus. Positively regulates odontoblastic differentiation in dental papilla cells, via promotion of IPO7-mediated translocation of phosphorylated SMAD2 to the nucleus and subsequent transcription of target genes. Can induce epithelial-to-mesenchymal transition (EMT) and cell migration in various cell types. This chain is Transforming growth factor beta-1 proprotein, found in Mus musculus (Mouse).